Consider the following 110-residue polypeptide: UPF0145 protein Blon_0093/BLIJ_0092 (110 aa).

This sequence belongs to the UPF0145 family.

This chain is UPF0145 protein Blon_0093/BLIJ_0092, found in Bifidobacterium longum subsp. infantis (strain ATCC 15697 / DSM 20088 / JCM 1222 / NCTC 11817 / S12).